The sequence spans 147 residues: Mitochondrial import receptor subunit TOM20 homolog (147 aa).

Residues 1–3 (MVA) lie on the Mitochondrial intermembrane side of the membrane. Residues 4–26 (VGKTSAIAAGVCGALLLGYCIYF) traverse the membrane as a helical segment. Topologically, residues 27–147 (DRKRRSDPNF…AQNLSEDDVE (121 aa)) are cytoplasmic.

This sequence belongs to the Tom20 family. Forms part of the preprotein translocase complex of the outer mitochondrial membrane (TOM complex). Interacts with tom22.

The protein localises to the mitochondrion outer membrane. In terms of biological role, central component of the receptor complex responsible for the recognition and translocation of cytosolically synthesized mitochondrial preproteins. Together with tom22 functions as the transit peptide receptor at the surface of the mitochondrion outer membrane and facilitates the movement of preproteins into the tom40 translocation pore. This Xenopus laevis (African clawed frog) protein is Mitochondrial import receptor subunit TOM20 homolog (tomm20).